The chain runs to 339 residues: Enhancer of mRNA-decapping protein 1 (339 aa).

Disordered regions lie at residues 1-240 (MMMH…PPRY) and 309-339 (FPVNAQPPAHVGSAPQGQKISFDDLLGSAKK). Residues 13–25 (SPGSENHSNPASR) are compositionally biased toward polar residues. 2 stretches are compositionally biased toward basic and acidic residues: residues 26–38 (EQSKPKKETERRL) and 91–100 (DNKEKNKKLL). Residues 111–131 (NFSFYSESNSNSNSNVSSNSN) are compositionally biased toward low complexity. Over residues 163 to 173 (RPDKNGKKGPV) the composition is skewed to basic and acidic residues. The span at 196 to 212 (FQRTSPKQQANTINDEN) shows a compositional bias: polar residues. Residues 213 to 237 (SSPSSSASSVSMSSPRPVAGAVAAP) are compositionally biased toward low complexity.

It belongs to the EDC family.

The protein resides in the cytoplasm. Its function is as follows. mRNA-binding protein which stimulates mRNA decapping. This Scheffersomyces stipitis (strain ATCC 58785 / CBS 6054 / NBRC 10063 / NRRL Y-11545) (Yeast) protein is Enhancer of mRNA-decapping protein 1 (EDC1).